The sequence spans 122 residues: S-adenosylmethionine decarboxylase proenzyme (122 aa).

The active-site Schiff-base intermediate with substrate; via pyruvic acid is serine 61. Serine 61 bears the Pyruvic acid (Ser); by autocatalysis mark. The active-site Proton acceptor; for processing activity is histidine 66. Cysteine 81 acts as the Proton donor; for catalytic activity in catalysis.

This sequence belongs to the prokaryotic AdoMetDC family. Type 1 subfamily. In terms of assembly, heterotetramer of two alpha and two beta chains arranged as a dimer of alpha/beta heterodimers. Requires pyruvate as cofactor. Post-translationally, is synthesized initially as an inactive proenzyme. Formation of the active enzyme involves a self-maturation process in which the active site pyruvoyl group is generated from an internal serine residue via an autocatalytic post-translational modification. Two non-identical subunits are generated from the proenzyme in this reaction, and the pyruvate is formed at the N-terminus of the alpha chain, which is derived from the carboxyl end of the proenzyme. The post-translation cleavage follows an unusual pathway, termed non-hydrolytic serinolysis, in which the side chain hydroxyl group of the serine supplies its oxygen atom to form the C-terminus of the beta chain, while the remainder of the serine residue undergoes an oxidative deamination to produce ammonia and the pyruvoyl group blocking the N-terminus of the alpha chain.

The catalysed reaction is S-adenosyl-L-methionine + H(+) = S-adenosyl 3-(methylsulfanyl)propylamine + CO2. It participates in amine and polyamine biosynthesis; S-adenosylmethioninamine biosynthesis; S-adenosylmethioninamine from S-adenosyl-L-methionine: step 1/1. In terms of biological role, catalyzes the decarboxylation of S-adenosylmethionine to S-adenosylmethioninamine (dcAdoMet), the propylamine donor required for the synthesis of the polyamines spermine and spermidine from the diamine putrescine. The sequence is that of S-adenosylmethionine decarboxylase proenzyme from Prochlorococcus marinus (strain MIT 9211).